The primary structure comprises 161 residues: MTKGPVRLDVAVSYALPRAGLPSAVSFRKWVAAALKGRIREADLAVRVVDEKEGCSLNHHYRGKDYATNVLSFPAELPEGLPKGIKMPLLGDLVICAPVVAREAAEQGKSLAAHYAHLTVHGTLHLLGWDHEDDKEAEAMEQLEREILADLGIDDPYAGEH.

Zn(2+)-binding residues include H121, H125, and H131.

This sequence belongs to the endoribonuclease YbeY family. Requires Zn(2+) as cofactor.

It is found in the cytoplasm. In terms of biological role, single strand-specific metallo-endoribonuclease involved in late-stage 70S ribosome quality control and in maturation of the 3' terminus of the 16S rRNA. This is Endoribonuclease YbeY from Xanthomonas axonopodis pv. citri (strain 306).